Consider the following 87-residue polypeptide: Phosphoribosyl-ATP pyrophosphatase (87 aa).

The protein belongs to the PRA-PH family.

Its subcellular location is the cytoplasm. The enzyme catalyses 1-(5-phospho-beta-D-ribosyl)-ATP + H2O = 1-(5-phospho-beta-D-ribosyl)-5'-AMP + diphosphate + H(+). The protein operates within amino-acid biosynthesis; L-histidine biosynthesis; L-histidine from 5-phospho-alpha-D-ribose 1-diphosphate: step 2/9. In Corynebacterium glutamicum (strain ATCC 13032 / DSM 20300 / JCM 1318 / BCRC 11384 / CCUG 27702 / LMG 3730 / NBRC 12168 / NCIMB 10025 / NRRL B-2784 / 534), this protein is Phosphoribosyl-ATP pyrophosphatase (hisE).